A 428-amino-acid chain; its full sequence is Serine--tRNA ligase (428 aa).

231 to 233 (TSE) is an L-serine binding site. Residues 262-264 (RRE) and Val278 contribute to the ATP site. Residue Glu285 coordinates L-serine. Residue 349–352 (ELTS) coordinates ATP. Position 384 (Thr384) interacts with L-serine.

It belongs to the class-II aminoacyl-tRNA synthetase family. Type-1 seryl-tRNA synthetase subfamily. Homodimer. The tRNA molecule binds across the dimer.

It is found in the cytoplasm. It carries out the reaction tRNA(Ser) + L-serine + ATP = L-seryl-tRNA(Ser) + AMP + diphosphate + H(+). The enzyme catalyses tRNA(Sec) + L-serine + ATP = L-seryl-tRNA(Sec) + AMP + diphosphate + H(+). It participates in aminoacyl-tRNA biosynthesis; selenocysteinyl-tRNA(Sec) biosynthesis; L-seryl-tRNA(Sec) from L-serine and tRNA(Sec): step 1/1. Catalyzes the attachment of serine to tRNA(Ser). Is also able to aminoacylate tRNA(Sec) with serine, to form the misacylated tRNA L-seryl-tRNA(Sec), which will be further converted into selenocysteinyl-tRNA(Sec). This chain is Serine--tRNA ligase, found in Bifidobacterium longum subsp. infantis (strain ATCC 15697 / DSM 20088 / JCM 1222 / NCTC 11817 / S12).